The sequence spans 304 residues: Glycine--tRNA ligase alpha subunit (304 aa).

Belongs to the class-II aminoacyl-tRNA synthetase family. In terms of assembly, tetramer of two alpha and two beta subunits.

The protein resides in the cytoplasm. It carries out the reaction tRNA(Gly) + glycine + ATP = glycyl-tRNA(Gly) + AMP + diphosphate. In Pectobacterium atrosepticum (strain SCRI 1043 / ATCC BAA-672) (Erwinia carotovora subsp. atroseptica), this protein is Glycine--tRNA ligase alpha subunit.